A 146-amino-acid polypeptide reads, in one-letter code: VHLTDGEKNALSTAWGKVNADEVGGEALGRLLVVYPWTQRFFDSFGDLSSATAVMGNPKVKAHGKKVLDSFSNGLKHLDNLKGTFASLSELHCDKLHVDPENFRLLGNVLVVVLAHHLGKEFTPQVQAAFQKVVAGVANALAHKYH.

The residue at position 1 (Val-1) is an N-acetylvaline. The 145-residue stretch at 2 to 146 (HLTDGEKNAL…VANALAHKYH (145 aa)) folds into the Globin domain. Residue Ser-44 is modified to Phosphoserine. The residue at position 59 (Lys-59) is an N6-acetyllysine. Heme b is bound at residue His-63. At Lys-82 the chain carries N6-acetyllysine. His-92 contacts heme b. Cys-93 bears the S-nitrosocysteine mark. Lys-144 bears the N6-acetyllysine mark.

The protein belongs to the globin family. Heterotetramer of two alpha chains and two beta chains. Red blood cells.

Its function is as follows. Involved in oxygen transport from the lung to the various peripheral tissues. The polypeptide is Hemoglobin subunit beta (Otospermophilus beecheyi (California ground squirrel)).